Reading from the N-terminus, the 415-residue chain is Serine hydroxymethyltransferase (415 aa).

(6S)-5,6,7,8-tetrahydrofolate contacts are provided by residues Leu-120 and 124-126; that span reads GHL. Lys-229 is modified (N6-(pyridoxal phosphate)lysine).

Belongs to the SHMT family. Homodimer. Pyridoxal 5'-phosphate is required as a cofactor.

It is found in the cytoplasm. The enzyme catalyses (6R)-5,10-methylene-5,6,7,8-tetrahydrofolate + glycine + H2O = (6S)-5,6,7,8-tetrahydrofolate + L-serine. It functions in the pathway one-carbon metabolism; tetrahydrofolate interconversion. The protein operates within amino-acid biosynthesis; glycine biosynthesis; glycine from L-serine: step 1/1. Its function is as follows. Catalyzes the reversible interconversion of serine and glycine with tetrahydrofolate (THF) serving as the one-carbon carrier. This reaction serves as the major source of one-carbon groups required for the biosynthesis of purines, thymidylate, methionine, and other important biomolecules. Also exhibits THF-independent aldolase activity toward beta-hydroxyamino acids, producing glycine and aldehydes, via a retro-aldol mechanism. The chain is Serine hydroxymethyltransferase from Desulforudis audaxviator (strain MP104C).